The following is a 504-amino-acid chain: MSKQDGKLTGLFGAPVSDRENSMTAGRRGPLLMQDVYYLEQISHFDREVIPERRMHAKGSGAFGTFTVTNDITQYTNAKIFSEVGKQTEMFARFSTVSGERGAADLERDIRGFALKFYTEDGNWDLVGNNTPVFFFRDPKLFISLNRAVKRDPRTNMRSAQNNWDFWTGLPEALHQVTILMSDRGMPKGFRNMHGFGSHTYSMYNDKGERVWVKYHFRTQQGIENYTDEEAAKIVGMDRDSSQRDLYNAIENGDYPKWKMYIQVMTEEQAKNHPDNPFDLTKVWYKKDYPLIEVGEFELNRNPENYFLDVEQAAFAPTNIVPGLDYSPDKMLQGRLFSYGDAQRYRLGVNHWQIPVNQPKGVGVENLCPFSRDGQMRFLDNNQGGGPHYYPNNQGIYESQPEHKKPPFPTDGDGYEYNYRQDDDNYFEQPGKLFRLQSEDAKERIFTNTANAMDGVSKDVKVRHIRHCYKADPEYGKGVAKALDIDINQIDLETNQDETYENFK.

Active-site residues include histidine 56 and asparagine 129. Tyrosine 339 contributes to the heme binding site.

Belongs to the catalase family. In terms of assembly, homodimer. It depends on heme as a cofactor.

The catalysed reaction is 2 H2O2 = O2 + 2 H2O. Its function is as follows. Decomposes hydrogen peroxide into water and oxygen; serves to protect cells from the toxic effects of hydrogen peroxide. This Staphylococcus epidermidis protein is Catalase (katA).